We begin with the raw amino-acid sequence, 234 residues long: Probable porphobilinogen deaminase (234 aa).

The protein belongs to the HMBS family.

The enzyme catalyses 4 porphobilinogen + H2O = hydroxymethylbilane + 4 NH4(+). It participates in porphyrin-containing compound metabolism; protoporphyrin-IX biosynthesis; coproporphyrinogen-III from 5-aminolevulinate: step 2/4. Tetrapolymerization of the monopyrrole PBG into the hydroxymethylbilane pre-uroporphyrinogen in several discrete steps. In Chlamydia pneumoniae (Chlamydophila pneumoniae), this protein is Probable porphobilinogen deaminase (hemC).